The chain runs to 293 residues: Ribosomal protein L11 methyltransferase (293 aa).

The S-adenosyl-L-methionine site is built by T145, G166, D188, and N230.

Belongs to the methyltransferase superfamily. PrmA family.

The protein localises to the cytoplasm. The enzyme catalyses L-lysyl-[protein] + 3 S-adenosyl-L-methionine = N(6),N(6),N(6)-trimethyl-L-lysyl-[protein] + 3 S-adenosyl-L-homocysteine + 3 H(+). Functionally, methylates ribosomal protein L11. This Haemophilus ducreyi (strain 35000HP / ATCC 700724) protein is Ribosomal protein L11 methyltransferase.